The primary structure comprises 561 residues: Sesquiterpene synthase 1 (561 aa).

Asp-313, Asp-317, Asp-458, and Glu-466 together coordinate Mg(2+). The short motif at 313 to 317 (DDIYD) is the DDXXD motif element.

It belongs to the terpene synthase family. Tpsa subfamily. The cofactor is Mn(2+). Mg(2+) serves as cofactor.

The protein resides in the cytoplasm. It catalyses the reaction (2E,6E)-farnesyl diphosphate = (1S,8aR)-delta-cadinene + diphosphate. The protein operates within secondary metabolite biosynthesis; terpenoid biosynthesis. Involved in the biosynthesis of delta-cadinene. The chain is Sesquiterpene synthase 1 (STS1) from Thapsia garganica (Deadly carrot).